Here is a 381-residue protein sequence, read N- to C-terminus: Gustatory and pheromone receptor 39a, isoform C (381 aa).

Over 1-37 (MDFQPGELCAYYRLCRYLGIFCIDYNPTKKKFRLRRS) the chain is Cytoplasmic. Residues 38–58 (VLCYIVHFALQAYLVGCISVM) form a helical membrane-spanning segment. At 59 to 79 (VTYWRRCFKSELTTTGNHFDR) the chain is on the extracellular side. A helical transmembrane segment spans residues 80-100 (LVMVIALGILVVQNAWLIWLQ). At 101–129 (APHLRIVRQIEFYRRNHLANVRLLLPKRL) the chain is on the cytoplasmic side. The helical transmembrane segment at 130-150 (LWLIIATNVVYMANFIKTCIF) threads the bilayer. Topologically, residues 151–171 (EWLTDASRLFVITSLGFPLRY) are extracellular. A helical transmembrane segment spans residues 172-192 (LVTSFTMGTYFCMVHIVRLVL). At 193-239 (DWNQSQINAIIDESADLKMTSPNRLRLRVCLEMHDRLMLLCNDEISL) the chain is on the cytoplasmic side. Residues 240 to 260 (VYGFIAWLSWMFASLDVTGVI) traverse the membrane as a helical segment. Over 261–271 (YLTMVIQTKKS) the chain is Extracellular. Residues 272-292 (IVLKLITNVVWLSPTFMTCAA) traverse the membrane as a helical segment. Residues 293–350 (SFMSNRVTIQANKTAKMLTKVPRTGTGLDRMIEKFLLKNLRQKPILTAYGFFALDKST) are Cytoplasmic-facing. Residues 351–371 (LFKLFTAIFTYMVILVQFKEM) form a helical membrane-spanning segment. Topologically, residues 372–381 (ENSTKSINKF) are extracellular. Asparagine 373 carries an N-linked (GlcNAc...) asparagine glycan.

The protein belongs to the insect chemoreceptor superfamily. Gustatory receptor (GR) family. Gr21a subfamily. Expressed in the adult labellar chemosensory neurons. In larvae, is expressed in neurons of the terminal external chemosensory organ, as well as in the dorsal pharyngeal sense organ.

The protein resides in the cell membrane. Functionally, gustatory receptor which mediates acceptance or avoidance behavior, depending on its substrates. Plays a role in sustaining courtship behavior in males, possibly through the reception of a stimulating arrestant pheromone. The chain is Gustatory and pheromone receptor 39a, isoform C (Gr39a) from Drosophila melanogaster (Fruit fly).